Here is a 369-residue protein sequence, read N- to C-terminus: Anhydro-N-acetylmuramic acid kinase (369 aa).

Residue 12–19 coordinates ATP; the sequence is GTSMDGVD.

The protein belongs to the anhydro-N-acetylmuramic acid kinase family.

It catalyses the reaction 1,6-anhydro-N-acetyl-beta-muramate + ATP + H2O = N-acetyl-D-muramate 6-phosphate + ADP + H(+). The protein operates within amino-sugar metabolism; 1,6-anhydro-N-acetylmuramate degradation. It participates in cell wall biogenesis; peptidoglycan recycling. Its function is as follows. Catalyzes the specific phosphorylation of 1,6-anhydro-N-acetylmuramic acid (anhMurNAc) with the simultaneous cleavage of the 1,6-anhydro ring, generating MurNAc-6-P. Is required for the utilization of anhMurNAc either imported from the medium or derived from its own cell wall murein, and thus plays a role in cell wall recycling. The polypeptide is Anhydro-N-acetylmuramic acid kinase (Shewanella sp. (strain W3-18-1)).